The sequence spans 439 residues: Putrescine transporter PotE (439 aa).

The next 12 membrane-spanning stretches (helical) occupy residues 10–30 (GVVQ…IIML), 40–60 (ISII…WAFA), 91–111 (TYGV…VGYG), 114–134 (LLGA…VLWI), 152–172 (ITVW…WFWF), 186–206 (APFF…FLGL), 225–245 (IAVL…TNVI), 276–296 (VIMA…QFTI), 321–341 (APVQ…LMTI), 354–374 (NLAV…LVII), 387–407 (VANF…YSSG), and 410–430 (AMLY…LVSP).

Belongs to the amino acid-polyamine-organocation (APC) superfamily. Basic amino acid/polyamine antiporter (APA) (TC 2.A.3.2) family.

The protein localises to the cell inner membrane. The enzyme catalyses putrescine(in) + H(+)(in) = putrescine(out) + H(+)(out). It catalyses the reaction putrescine(in) + L-ornithine(out) = putrescine(out) + L-ornithine(in). Functionally, catalyzes both the uptake and excretion of putrescine. The uptake of putrescine is dependent on the membrane potential and the excretion involves putrescine-ornithine antiporter activity. The polypeptide is Putrescine transporter PotE (Escherichia coli O6:H1 (strain CFT073 / ATCC 700928 / UPEC)).